The primary structure comprises 335 residues: MKTLGQFIVEKQAEYPNAKGELSGILSSLRLVAKIIHRDINKAGLTNNIIGNSGVENVQGETQMKLDLFAHNTMKQALITREEVAGFASEEEENFVAFDTERGRNAKYVILTDPLDGSSNIDVNVAVGTIFSIYRRVSPIGTPVTLEDFLQPGHKQVAAGYIVYGSSTMLVYTTGNGVNGFTYDPSLGVFCLSHENIQIPPNGKIYSINEGQYLKFPMGVKKYIKYCQEKDKSTDRPYTSRYIGSLVSDFHRNMLKGGIYIYPSATTYPKGKLRLLYEGNPMAFLAEQAGGIASDGKDRILDIQPKELHERVPLFVGSREMVRKAEEFMREFSEE.

Mg(2+) is bound by residues Glu-90, Asp-113, Leu-115, and Asp-116. Substrate contacts are provided by residues Asp-116–Ser-119, Asn-209, Tyr-242, and Lys-272. Position 278 (Glu-278) interacts with Mg(2+).

This sequence belongs to the FBPase class 1 family. In terms of assembly, homotetramer. It depends on Mg(2+) as a cofactor.

The protein localises to the cytoplasm. The enzyme catalyses beta-D-fructose 1,6-bisphosphate + H2O = beta-D-fructose 6-phosphate + phosphate. It participates in carbohydrate biosynthesis; gluconeogenesis. The polypeptide is Fructose-1,6-bisphosphatase class 1 (Histophilus somni (strain 2336) (Haemophilus somnus)).